Consider the following 62-residue polypeptide: Large ribosomal subunit protein bL32 (62 aa).

Positions 1 to 16 (MAVPKRKTSPSRRGMR) are enriched in basic residues. Positions 1–44 (MAVPKRKTSPSRRGMRRSADALKAPTYVEDKDSGELRRPHHIDL) are disordered. Residues 28–44 (VEDKDSGELRRPHHIDL) show a composition bias toward basic and acidic residues.

This sequence belongs to the bacterial ribosomal protein bL32 family.

The sequence is that of Large ribosomal subunit protein bL32 from Methylorubrum extorquens (strain CM4 / NCIMB 13688) (Methylobacterium extorquens).